Here is a 718-residue protein sequence, read N- to C-terminus: Heat shock 70 kDa protein 7, chloroplastic (718 aa).

A chloroplast-targeting transit peptide spans 1–92 (MASSAAQIHI…IDLGTTNSAV (92 aa)). The span at 668-678 (QIGQSLYNQPQ) shows a compositional bias: polar residues. The segment at 668–718 (QIGQSLYNQPQPGGADSPPGGEASSSSDTSSSAKGGDNGGDVIDADFTDSN) is disordered.

It belongs to the heat shock protein 70 (TC 1.A.33) family. DnaK subfamily.

It localises to the plastid. Its subcellular location is the chloroplast stroma. Its function is as follows. Acts redundantly with HSP70-6 in the thermotolerance of germinating seeds. Plays an important role in the protein precursor import into chloroplasts. Functionally, in cooperation with other chaperones, Hsp70s are key components that facilitate folding of de novo synthesized proteins, assist translocation of precursor proteins into organelles, and are responsible for degradation of damaged protein under stress conditions. The chain is Heat shock 70 kDa protein 7, chloroplastic (HSP70-7) from Arabidopsis thaliana (Mouse-ear cress).